The primary structure comprises 542 residues: Glucans biosynthesis protein G (542 aa).

The first 34 residues, 1–34 (MVSLLRCPSSKPYSSLICSLTLGAVVALSGVAYA), serve as a signal peptide directing secretion.

It belongs to the OpgD/OpgG family.

It is found in the periplasm. It functions in the pathway glycan metabolism; osmoregulated periplasmic glucan (OPG) biosynthesis. Functionally, involved in the biosynthesis of osmoregulated periplasmic glucans (OPGs). In Shewanella baltica (strain OS155 / ATCC BAA-1091), this protein is Glucans biosynthesis protein G.